We begin with the raw amino-acid sequence, 1960 residues long: [F-actin]-monooxygenase MICAL3 (1960 aa).

A monooxygenase domain region spans residues Glu2–Lys494. Residues Cys97, Glu116–Arg118, Arg123–Asn125, Phe183, Tyr298, and Asp398 each bind FAD. The Calponin-homology (CH) domain maps to Val518–Lys624. Ser649 carries the phosphoserine modification. Residues Gly658–Val704 are disordered. Positions Asp669–Gly679 are enriched in basic and acidic residues. 2 positions are modified to phosphoserine: Ser685 and Ser687. One can recognise an LIM zinc-binding domain in the interval Asp762 to Gly824. Zn(2+) is bound by residues Cys764, Cys767, His785, Cys788, Cys791, Cys794, Cys814, and His817. Disordered stretches follow at residues Ala826–Thr887 and Leu906–Lys1295. Thr887 is modified (phosphothreonine). Ser971 carries the post-translational modification Phosphoserine. Residues Gly984–Ser1014 are compositionally biased toward acidic residues. Composition is skewed to basic and acidic residues over residues His1039 to Ala1051 and Asp1072 to Ala1084. Ser1129, Ser1139, Ser1156, and Ser1188 each carry phosphoserine. 2 stretches are compositionally biased toward pro residues: residues Ser1192–Glu1203 and Arg1217–Gln1233. Residue Ser1250 is modified to Phosphoserine. Thr1252 carries the post-translational modification Phosphothreonine. A phosphoserine mark is found at Ser1254, Ser1286, and Ser1313. The span at Gln1277–Ser1286 shows a compositional bias: polar residues. Disordered stretches follow at residues Leu1316–Leu1550 and Arg1564–Leu1782. Position 1317 is a phosphothreonine (Thr1317). A compositionally biased stretch (basic and acidic residues) spans Pro1379–Leu1393. Positions Ser1394–Ser1406 are enriched in low complexity. A Phosphoserine modification is found at Ser1404. Positions Arg1407–Thr1425 are enriched in polar residues. Thr1425 is subject to Phosphothreonine. Residues Ser1485–Thr1503 are compositionally biased toward acidic residues. The span at Ala1594–Ala1611 shows a compositional bias: low complexity. Residues Gly1616–Thr1627 are compositionally biased toward basic and acidic residues. A compositionally biased stretch (low complexity) spans Ser1633 to Gly1653. A compositionally biased stretch (basic residues) spans Lys1654–Lys1672. Residues Ser1660 and Ser1663 each carry the phosphoserine modification. Over residues Cys1718 to Thr1727 the composition is skewed to polar residues. Basic and acidic residues predominate over residues Val1762–Thr1778. A coiled-coil region spans residues Glu1779–Ser1952. The bMERB domain maps to Lys1799 to Ala1948. Residue Ser1870 is modified to Phosphoserine.

This sequence belongs to the Mical family. In terms of assembly, interacts with RAB1B, RAB8A, RAB10, RAB13 and RAB15 (in their GTP-bound forms); binding to RAB1B is of low affinity compared to other Rab proteins; at least in case of RAB8A can bind 2 molecules of RAB8A simultaneously through a high and a low affinity binding site, respectively. Interacts with ERC1 and RAB8A; may bridge ERC1 with RAB8A. Interacts with KIF23 and ERC1; enhances the interaction between KIF23 and ERC1. Interacts with NINL. It depends on FAD as a cofactor.

It localises to the cytoplasm. Its subcellular location is the cell cortex. It is found in the cytoskeleton. The protein resides in the nucleus. The protein localises to the midbody. It localises to the spindle. Its subcellular location is the cilium basal body. It catalyses the reaction L-methionyl-[F-actin] + NADPH + O2 + H(+) = L-methionyl-(R)-S-oxide-[F-actin] + NADP(+) + H2O. In terms of biological role, monooxygenase that promotes depolymerization of F-actin by mediating oxidation of specific methionine residues on actin to form methionine-sulfoxide, resulting in actin filament disassembly and preventing repolymerization. In the absence of actin, it also functions as a NADPH oxidase producing H(2)O(2). Seems to act as Rab effector protein and play a role in vesicle trafficking. Involved in exocytic vesicles tethering and fusion: the monooxygenase activity is required for this process and implicates RAB8A associated with exocytotic vesicles. Required for cytokinesis. Contributes to stabilization and/or maturation of the intercellular bridge independently of its monooxygenase activity. Promotes recruitment of Rab8 and ERC1 to the intercellular bridge, and together these proteins are proposed to function in timely abscission. The chain is [F-actin]-monooxygenase MICAL3 (MICAL3) from Bos taurus (Bovine).